The sequence spans 1040 residues: Contactin-2 (1040 aa).

Residues 1-30 form the signal peptide; sequence MGTATRRKPHLLLVAAVALVSSSAWSSALG. Ig-like C2-type domains are found at residues 43 to 128, 133 to 222, 239 to 322, 327 to 411, 417 to 504, and 509 to 603; these read PLSV…AILR, QEFS…SVFS, PSIK…GRII, PEWL…AELA, PDFR…GILS, and TKIT…ATVL. Intrachain disulfides connect C61-C111, C155-C207, C261-C306, and C348-C395. 3 N-linked (GlcNAc...) asparagine glycosylation sites follow: N76, N198, and N204. N461, N477, N498, and N525 each carry an N-linked (GlcNAc...) asparagine glycan. Fibronectin type-III domains follow at residues 610-708, 713-810, 815-910, and 915-1006; these read PPGG…TREA, APSG…SAEE, APTK…TMKP, and PPGN…NGGT. Residues 694–720 form a disordered region; that stretch reads GEPSGPSSKIRTREAAPSVAPSGLSGG. Positions 794 to 796 match the Cell attachment site motif; it reads RGD. Residues N830, N904, N918, and N940 are each glycosylated (N-linked (GlcNAc...) asparagine). The disordered stretch occupies residues 894-919; it reads AGTGPASPSANATTMKPPPRRPPGNI. N1012 is lipidated: GPI-anchor amidated asparagine. Residues 1013–1040 constitute a propeptide, removed in mature form; the sequence is MAVRPAPHPGTVISHSVAMLILIGSLEL.

Belongs to the immunoglobulin superfamily. Contactin family.

The protein localises to the cell membrane. In conjunction with another transmembrane protein, CNTNAP2, contributes to the organization of axonal domains at nodes of Ranvier by maintaining voltage-gated potassium channels at the juxtaparanodal region. May be involved in cell adhesion. In Homo sapiens (Human), this protein is Contactin-2 (CNTN2).